Reading from the N-terminus, the 227-residue chain is 27 kDa A-type inclusion protein (227 aa).

Positions 4 to 210 form a coiled coil; the sequence is MPKQREMRRL…AECRRGNNGS (207 aa).

This is 27 kDa A-type inclusion protein from Bos taurus (Bovine).